Consider the following 105-residue polypeptide: Small ribosomal subunit protein uS10 (105 aa).

It belongs to the universal ribosomal protein uS10 family. In terms of assembly, part of the 30S ribosomal subunit.

Functionally, involved in the binding of tRNA to the ribosomes. This Rickettsia massiliae (strain Mtu5) protein is Small ribosomal subunit protein uS10.